We begin with the raw amino-acid sequence, 56 residues long: Large ribosomal subunit protein bL32 (56 aa).

Positions 1-37 (MAVQQNKKSRSRRDMRRSHDALTTAAVSVDKTTGETH) are disordered. The segment covering 7–16 (KKSRSRRDMR) has biased composition (basic residues).

This sequence belongs to the bacterial ribosomal protein bL32 family.

In Haemophilus ducreyi (strain 35000HP / ATCC 700724), this protein is Large ribosomal subunit protein bL32.